The chain runs to 191 residues: Protein YceI (191 aa).

The first 22 residues, 1-22, serve as a signal peptide directing secretion; the sequence is MKKNLLGFTFASLLFTTGSAVA.

Belongs to the UPF0312 family. Type 1 subfamily.

It is found in the periplasm. In Salmonella agona (strain SL483), this protein is Protein YceI.